We begin with the raw amino-acid sequence, 160 residues long: Large ribosomal subunit protein uL15 (160 aa).

The segment covering 1 to 13 (MKLHELSDNDGAA) has biased composition (basic and acidic residues). The disordered stretch occupies residues 1 to 42 (MKLHELSDNDGAAKKRKRVGRGPGSGTGKMGGRGIKGQKSRS). Gly residues predominate over residues 21 to 35 (RGPGSGTGKMGGRGI).

It belongs to the universal ribosomal protein uL15 family. Part of the 50S ribosomal subunit.

Its function is as follows. Binds to the 23S rRNA. In Roseobacter denitrificans (strain ATCC 33942 / OCh 114) (Erythrobacter sp. (strain OCh 114)), this protein is Large ribosomal subunit protein uL15.